A 212-amino-acid polypeptide reads, in one-letter code: Large ribosomal subunit protein uL3 (212 aa).

The residue at position 153 (Q153) is an N5-methylglutamine.

It belongs to the universal ribosomal protein uL3 family. As to quaternary structure, part of the 50S ribosomal subunit. Forms a cluster with proteins L14 and L19. Post-translationally, methylated by PrmB.

One of the primary rRNA binding proteins, it binds directly near the 3'-end of the 23S rRNA, where it nucleates assembly of the 50S subunit. The sequence is that of Large ribosomal subunit protein uL3 from Idiomarina loihiensis (strain ATCC BAA-735 / DSM 15497 / L2-TR).